A 269-amino-acid chain; its full sequence is Chymotrypsin-like elastase family member 3B (269 aa).

The first 16 residues, 1-16 (MLRLLSSLLLVALASG), serve as a signal peptide directing secretion. A propeptide spans 17-27 (CGQPSHNPSSR) (activation peptide). One can recognise a Peptidase S1 domain in the interval 28 to 267 (VVNGEEAVPH…FIDWIEETIA (240 aa)). Residues Cys57 and Cys73 are joined by a disulfide bond. Catalysis depends on charge relay system residues His72 and Asp122. Intrachain disulfides connect Cys156-Cys222, Cys187-Cys203, and Cys212-Cys243. Ser216 (charge relay system) is an active-site residue.

The protein belongs to the peptidase S1 family. Elastase subfamily.

The catalysed reaction is Preferential cleavage: Ala-|-Xaa. Does not hydrolyze elastin.. Functionally, efficient protease with alanine specificity but only little elastolytic activity. The protein is Chymotrypsin-like elastase family member 3B (Cela3b) of Mus musculus (Mouse).